The chain runs to 471 residues: Variant surface glycoprotein WRATAT A (471 aa).

The N-terminal stretch at 1–18 (MSVLFLLLAITRTASVKA) is a signal peptide. Residues asparagine 61 and asparagine 133 are each glycosylated (N-linked (GlcNAc...) asparagine). The disordered stretch occupies residues 373-457 (QEQTLATTGT…ANTTGSSNSF (85 aa)). A compositionally biased stretch (low complexity) spans 379-392 (TTGTKSSSPQSTQQ). 2 cysteine pairs are disulfide-bonded: cysteine 401–cysteine 414 and cysteine 410–cysteine 427. Over residues 401 to 447 (CNDKAKETECNSPCKWDKEEKDEKKRCKLSEEGKQAEKENQEGKDGK) the composition is skewed to basic and acidic residues. Positions 448 to 457 (ANTTGSSNSF) are enriched in polar residues. Residue asparagine 449 is glycosylated (N-linked (GlcNAc...) asparagine). Residue serine 454 is the site of GPI-anchor amidated serine attachment. Positions 455–471 (NSFVIKTSPLLLAVLLL) are cleaved as a propeptide — removed in mature form.

It is found in the cell membrane. Its function is as follows. VSG forms a coat on the surface of the parasite. The trypanosome evades the immune response of the host by expressing a series of antigenically distinct VSGs from an estimated 1000 VSG genes. This chain is Variant surface glycoprotein WRATAT A, found in Trypanosoma brucei rhodesiense.